Here is a 475-residue protein sequence, read N- to C-terminus: Ribulose bisphosphate carboxylase large chain (475 aa).

A propeptide spanning residues 1 to 2 (MS) is cleaved from the precursor. N-acetylproline is present on Pro3. Position 14 is an N6,N6,N6-trimethyllysine (Lys14). The substrate site is built by Asn123 and Thr173. The active-site Proton acceptor is the Lys175. Substrate is bound at residue Lys177. Lys201, Asp203, and Glu204 together coordinate Mg(2+). Lys201 carries the N6-carboxylysine modification. The active-site Proton acceptor is His294. Residues Arg295, His327, and Ser379 each contribute to the substrate site.

It belongs to the RuBisCO large chain family. Type I subfamily. Heterohexadecamer of 8 large chains and 8 small chains. It depends on Mg(2+) as a cofactor.

Its subcellular location is the plastid. It is found in the chloroplast. It catalyses the reaction 2 (2R)-3-phosphoglycerate + 2 H(+) = D-ribulose 1,5-bisphosphate + CO2 + H2O. It carries out the reaction D-ribulose 1,5-bisphosphate + O2 = 2-phosphoglycolate + (2R)-3-phosphoglycerate + 2 H(+). In terms of biological role, ruBisCO catalyzes two reactions: the carboxylation of D-ribulose 1,5-bisphosphate, the primary event in carbon dioxide fixation, as well as the oxidative fragmentation of the pentose substrate in the photorespiration process. Both reactions occur simultaneously and in competition at the same active site. This Huperzia lucidula (Shining clubmoss) protein is Ribulose bisphosphate carboxylase large chain.